The sequence spans 779 residues: Probable ATP-dependent RNA helicase DHX40 (779 aa).

The disordered stretch occupies residues Met1 to Phe53. Positions Arg13 to Gly41 are enriched in basic and acidic residues. A compositionally biased stretch (polar residues) spans Cys42–Phe53. Residues Ile63 to Pro231 form the Helicase ATP-binding domain. Gly76–Thr83 lines the ATP pocket. The DEAH box signature appears at Asp173–His176. A Helicase C-terminal domain is found at Thr263–Ala442.

This sequence belongs to the DEAD box helicase family. DEAH subfamily.

The catalysed reaction is ATP + H2O = ADP + phosphate + H(+). Functionally, probable ATP-dependent RNA helicase. The sequence is that of Probable ATP-dependent RNA helicase DHX40 (Dhx40) from Rattus norvegicus (Rat).